The chain runs to 310 residues: Upstream stimulatory factor 1 (310 aa).

The span at 1–17 (MKGQQKTAETEEGTVQI) shows a compositional bias: polar residues. Disordered stretches follow at residues 1 to 26 (MKGQ…ATGE) and 171 to 209 (QGGS…EVER). Over residues 190-209 (EAPRTTRDEKRRAQHNEVER) the composition is skewed to basic and acidic residues. The region spanning 199–254 (KRRAQHNEVERRRRDKINNWIVQLSKIIPDCSMESTKSGQSKGGILSKACDYIQEL) is the bHLH domain. The tract at residues 271 to 292 (LQLDNDVLRQQVEDLKNKNLLL) is leucine-zipper. Residue lysine 306 forms a Glycyl lysine isopeptide (Lys-Gly) (interchain with G-Cter in SUMO2) linkage.

As to quaternary structure, efficient DNA binding requires dimerization with another bHLH protein. Binds DNA as a homodimer or a heterodimer (USF1/USF2).

Its subcellular location is the nucleus. Functionally, transcription factor that binds to a symmetrical DNA sequence (E-boxes) (5'-CACGTG-3') that is found in a variety of viral and cellular promoters. The sequence is that of Upstream stimulatory factor 1 (USF1) from Bos taurus (Bovine).